We begin with the raw amino-acid sequence, 67 residues long: Probable Sec-independent protein translocase protein TatE (67 aa).

A helical membrane pass occupies residues 4-21; the sequence is ISITKLLVVAALVVLLFG.

It belongs to the TatA/E family. TatE subfamily.

Its subcellular location is the cell inner membrane. Functionally, part of the twin-arginine translocation (Tat) system that transports large folded proteins containing a characteristic twin-arginine motif in their signal peptide across membranes. TatE shares overlapping functions with TatA. This Salmonella arizonae (strain ATCC BAA-731 / CDC346-86 / RSK2980) protein is Probable Sec-independent protein translocase protein TatE.